The primary structure comprises 108 residues: UPF0235 protein APE_0182.1 (108 aa).

Belongs to the UPF0235 family.

This Aeropyrum pernix (strain ATCC 700893 / DSM 11879 / JCM 9820 / NBRC 100138 / K1) protein is UPF0235 protein APE_0182.1.